A 102-amino-acid polypeptide reads, in one-letter code: Glutaredoxin 1 (102 aa).

The Glutaredoxin domain maps to 1 to 96 (MNKAILHTII…KLLENQPKTT (96 aa)). The cysteines at positions 17 and 20 are disulfide-linked.

It belongs to the glutaredoxin family. In terms of assembly, monomer.

The protein localises to the cytoplasm. Functionally, has a glutathione-disulfide oxidoreductase activity in the presence of NADPH and glutathione reductase. Reduces low molecular weight disulfides and proteins. The chain is Glutaredoxin 1 (grxC1) from Rickettsia conorii (strain ATCC VR-613 / Malish 7).